The sequence spans 51 residues: Non-specific lipid-transfer protein (51 aa).

Belongs to the plant LTP family.

Functionally, plant non-specific lipid-transfer proteins transfer phospholipids as well as galactolipids across membranes. May play a role in wax or cutin deposition in the cell walls of expanding epidermal cells and certain secretory tissues. The sequence is that of Non-specific lipid-transfer protein from Lycium barbarum (Barbary matrimony-vine).